The primary structure comprises 163 residues: Ureidoglycolate lyase (163 aa).

It belongs to the ureidoglycolate lyase family. In terms of assembly, homodimer. Ni(2+) serves as cofactor.

It carries out the reaction (S)-ureidoglycolate = urea + glyoxylate. The protein operates within nitrogen metabolism; (S)-allantoin degradation. In terms of biological role, catalyzes the catabolism of the allantoin degradation intermediate (S)-ureidoglycolate, generating urea and glyoxylate. Involved in the utilization of allantoin as nitrogen source. In Mesorhizobium japonicum (strain LMG 29417 / CECT 9101 / MAFF 303099) (Mesorhizobium loti (strain MAFF 303099)), this protein is Ureidoglycolate lyase.